A 523-amino-acid polypeptide reads, in one-letter code: Sensory neuron membrane protein 1 (523 aa).

Residues 1-10 (MRLARGIKYA) lie on the Cytoplasmic side of the membrane. Residues 11 to 31 (VIGAGVALFGVLFGWVMFPAI) form a helical membrane-spanning segment. Topologically, residues 32–458 (LKSQLKKEMA…NQLFIPKRIV (427 aa)) are extracellular. N67 and N229 each carry an N-linked (GlcNAc...) asparagine glycan. 3 cysteine pairs are disulfide-bonded: C268–C333, C297–C352, and C335–C341. N440 is a glycosylation site (N-linked (GlcNAc...) asparagine). A helical transmembrane segment spans residues 459–479 (SVIRWWLLSFGMLAALGGVIF). At 480–523 (HFKDDIMRIAIKGDSSVTKVNPEDGEQKDVSVIGQSHEPPKINM) the chain is on the cytoplasmic side. Positions 499–523 (VNPEDGEQKDVSVIGQSHEPPKINM) are disordered.

The protein belongs to the CD36 family. In terms of tissue distribution, localizes to both male and female antennae but not the leg, wing, gut, head, or thoracic ganglia. Detected throughout the sensory epithelium, associating with both sex-pheromone sensilla and plant-volatile sensilla. Differentially expressed both among different sensilla and different neurons within a given sensillum. Expression coincides with that of several other olfactory-specific proteins that are involved in odor detection.

The protein resides in the cell membrane. Plays an olfactory role that is not restricted to pheromone sensitivity. The polypeptide is Sensory neuron membrane protein 1 (Manduca sexta (Tobacco hawkmoth)).